Consider the following 680-residue polypeptide: MIDRYKHQQLRIGLVSPQQISAWATKIIPNGEIVGEVTKPYTFHYKTNKPEKDGLFCERIFGPIKSGICACGNYRVIGDEKEDPKFCEQCGVEFVDSRIRRYQMGYIKLTCPVTHVWYLKRLPSYIANLLDKPLKELEGLVYCDFSFARPITKKPTFLRLRGSFEYEIQSWKYSIPLFFTTQGFDIFRNREISTGAGAIREQLADLDLRIIIENSLVEWKQLGEEGPTGNEWEDRKIVRRKDFLVRRMELAKHFIRTNIEPEWMVLCLLPVLPPELRPIIQIEGGKLMSSDINELYRRVIYRNNTLTDLLTTSRSTPGELVMCQEKLVQEAVDTLLDNGIRGQPMRDGHNKVYKSFSDVIEGKEGRFRETLLGKRVDYSGRSVIVVGPSLSLHRCGLPREIAIELFQTFVIRGLIRQHLASNIGVAKSQIREKKPIVWEILQEVMQGHPVLLNRAPTLHRLGIQSFQPILVEGRTICLHPLVCKGFNADFDGDQMAVHVPLSLEAQAEARLLMFSHMNLLSPAIGDPISVPTQDMLIGLYVLTSGTRRGICANRYNPCNRKNYQNERISETNYKYTKEPFFCNSYDAIGAYRQKRINLDSPLWLRWQLDQRVIASREVPIEVHYESFGNYHEIYAHYLIVRSVKKETFCIYIRTTVGHISFYREIEEAIQGFSQACSYAT.

C69, C71, C87, and C90 together coordinate Zn(2+). The Mg(2+) site is built by D489, D491, and D493.

This sequence belongs to the RNA polymerase beta' chain family. RpoC1 subfamily. As to quaternary structure, in plastids the minimal PEP RNA polymerase catalytic core is composed of four subunits: alpha, beta, beta', and beta''. When a (nuclear-encoded) sigma factor is associated with the core the holoenzyme is formed, which can initiate transcription. Mg(2+) is required as a cofactor. Requires Zn(2+) as cofactor.

It localises to the plastid. Its subcellular location is the chloroplast. The enzyme catalyses RNA(n) + a ribonucleoside 5'-triphosphate = RNA(n+1) + diphosphate. Functionally, DNA-dependent RNA polymerase catalyzes the transcription of DNA into RNA using the four ribonucleoside triphosphates as substrates. In Olimarabidopsis pumila (Dwarf rocket), this protein is DNA-directed RNA polymerase subunit beta'.